We begin with the raw amino-acid sequence, 381 residues long: 4-hydroxy-3-methylbut-2-en-1-yl diphosphate synthase (flavodoxin) (381 aa).

Residues cysteine 273, cysteine 276, cysteine 308, and glutamate 315 each contribute to the [4Fe-4S] cluster site.

It belongs to the IspG family. [4Fe-4S] cluster is required as a cofactor.

It catalyses the reaction (2E)-4-hydroxy-3-methylbut-2-enyl diphosphate + oxidized [flavodoxin] + H2O + 2 H(+) = 2-C-methyl-D-erythritol 2,4-cyclic diphosphate + reduced [flavodoxin]. It participates in isoprenoid biosynthesis; isopentenyl diphosphate biosynthesis via DXP pathway; isopentenyl diphosphate from 1-deoxy-D-xylulose 5-phosphate: step 5/6. Converts 2C-methyl-D-erythritol 2,4-cyclodiphosphate (ME-2,4cPP) into 1-hydroxy-2-methyl-2-(E)-butenyl 4-diphosphate. The sequence is that of 4-hydroxy-3-methylbut-2-en-1-yl diphosphate synthase (flavodoxin) from Gluconobacter oxydans (strain 621H) (Gluconobacter suboxydans).